The primary structure comprises 178 residues: Large ribosomal subunit protein uL6 (178 aa).

Belongs to the universal ribosomal protein uL6 family. As to quaternary structure, part of the 50S ribosomal subunit.

This protein binds to the 23S rRNA, and is important in its secondary structure. It is located near the subunit interface in the base of the L7/L12 stalk, and near the tRNA binding site of the peptidyltransferase center. The polypeptide is Large ribosomal subunit protein uL6 (Symbiobacterium thermophilum (strain DSM 24528 / JCM 14929 / IAM 14863 / T)).